Reading from the N-terminus, the 155-residue chain is Cyanate hydratase (155 aa).

Active-site residues include Arg95, Glu98, and Ser121.

This sequence belongs to the cyanase family.

It carries out the reaction cyanate + hydrogencarbonate + 3 H(+) = NH4(+) + 2 CO2. Its function is as follows. Catalyzes the reaction of cyanate with bicarbonate to produce ammonia and carbon dioxide. The protein is Cyanate hydratase of Pseudomonas syringae pv. tomato (strain ATCC BAA-871 / DC3000).